The chain runs to 147 residues: Hemoglobin subunit beta-1 (147 aa).

Positions 3 to 147 (NLTAKERQLI…IADALGKGYH (145 aa)) constitute a Globin domain. Heme b is bound by residues His64 and His93.

Belongs to the globin family. Heterotetramer of two alpha chains and two beta chains. As to expression, red blood cells.

Involved in oxygen transport from the lung to the various peripheral tissues. This is Hemoglobin subunit beta-1 (hbb1) from Xenopus tropicalis (Western clawed frog).